We begin with the raw amino-acid sequence, 722 residues long: Methionine--tRNA ligase (722 aa).

The 'HIGH' region motif lies at 11–21 (PYANGPIHAGH). Residues Cys143, Cys146, Cys156, and Cys159 each coordinate Zn(2+). The 'KMSKS' region signature appears at 344-348 (KFSTS). Residue Thr347 coordinates ATP. Residues 622 to 722 (DFAKLDLRVG…KEVKLGAKVR (101 aa)) enclose the tRNA-binding domain.

Belongs to the class-I aminoacyl-tRNA synthetase family. MetG type 1 subfamily. Homodimer. Requires Zn(2+) as cofactor.

It localises to the cytoplasm. It catalyses the reaction tRNA(Met) + L-methionine + ATP = L-methionyl-tRNA(Met) + AMP + diphosphate. In terms of biological role, is required not only for elongation of protein synthesis but also for the initiation of all mRNA translation through initiator tRNA(fMet) aminoacylation. This Pyrococcus abyssi (strain GE5 / Orsay) protein is Methionine--tRNA ligase.